The chain runs to 116 residues: Spexin (116 aa).

A signal peptide spans 1–26 (MKGFKSLVVMTLTLFLVFSFMGNCNS). Residues 27-35 (APQRLFERR) constitute a propeptide that is removed on maturation. Q49 bears the Glutamine amide mark. 2 consecutive propeptides follow at residues 50–116 (GRRF…LLNW) and 74–116 (PNSQ…LLNW). The segment covering 53–73 (FLSDQSRRKDLSDRPPLERRS) has biased composition (basic and acidic residues). Residues 53 to 80 (FLSDQSRRKDLSDRPPLERRSPNSQQLT) form a disordered region.

It belongs to the spexin family.

The protein resides in the secreted. Its subcellular location is the extracellular space. It is found in the cytoplasmic vesicle. The protein localises to the secretory vesicle. Plays a role as a central modulator of cardiovascular and renal function and nociception. Also plays a role in energy metabolism and storage. Inhibits adrenocortical cell proliferation with minor stimulation on corticosteroid release. In terms of biological role, acts as a ligand for galanin receptors GALR2 and GALR3. Intracerebroventricular administration of the peptide induces an increase in arterial blood pressure, a decrease in both heart rate and renal excretion and delayed natriuresis. Intraventricular administration of the peptide induces antinociceptive activity. Also induces contraction of muscarinic-like stomach smooth muscles. Intraperitoneal administration of the peptide induces a reduction in food consumption and body weight. Inhibits long chain fatty acid uptake into adipocytes. Functionally, intracerebroventricular administration of the peptide induces a decrease in heart rate, but no change in arterial pressure, and an increase in urine flow rate. Intraventricular administration of the peptide induces antinociceptive activity. The chain is Spexin (SPX) from Bos taurus (Bovine).